A 188-amino-acid polypeptide reads, in one-letter code: Small acidic protein (188 aa).

A disordered region spans residues 1–188 (MSAREERYQR…KMLFVKSTGS (188 aa)). The span at 49-82 (GKKEHTGRLVIGDHKSTSHFRSGVEDKKISDQLE) shows a compositional bias: basic and acidic residues. Polar residues predominate over residues 83 to 95 (HQYQQSMDSSMSG). Positions 130–152 (SESSNEVSSEEESESESVSEEET) are enriched in acidic residues. The segment covering 153–176 (AADKQKPTKPNEKDSFPDSRDGKS) has biased composition (basic and acidic residues).

It belongs to the SMAP family.

This Xenopus laevis (African clawed frog) protein is Small acidic protein (smap).